A 291-amino-acid polypeptide reads, in one-letter code: Small ribosomal subunit protein uS2 (291 aa).

The interval 256-291 (STTAPPNWEATGGDWATSTAPAEGWAGDAPAGETKW) is disordered.

The protein belongs to the universal ribosomal protein uS2 family. Component of the small ribosomal subunit. Mature ribosomes consist of a small (40S) and a large (60S) subunit. The 40S subunit contains about 33 different proteins and 1 molecule of RNA (18S). The 60S subunit contains about 49 different proteins and 3 molecules of RNA (25S, 5.8S and 5S). Interacts with RPS21.

Its subcellular location is the cytoplasm. Required for the assembly and/or stability of the 40S ribosomal subunit. Required for the processing of the 20S rRNA-precursor to mature 18S rRNA in a late step of the maturation of 40S ribosomal subunits. This is Small ribosomal subunit protein uS2 from Coccidioides immitis (strain RS) (Valley fever fungus).